Here is a 397-residue protein sequence, read N- to C-terminus: Dual oxidase maturation factor 1 (397 aa).

A run of 2 helical transmembrane segments spans residues 26 to 46 (FVIF…LPGV) and 57 to 77 (YVLM…PCWA). A glycan (N-linked (GlcNAc...) asparagine) is linked at asparagine 109. Transmembrane regions (helical) follow at residues 191–211 (AAIW…LFLP), 218–238 (ILAT…LSPC), and 261–281 (CFYL…GLGI). A disordered region spans residues 324 to 376 (YGTNTTNSSRDKNDISSDKTAGSSGFQSRTSTCQSSASSASLRSQSSIETVHD). Asparagine 327 and asparagine 330 each carry an N-linked (GlcNAc...) asparagine glycan. The segment covering 341-350 (DKTAGSSGFQ) has biased composition (polar residues). The span at 351-370 (SRTSTCQSSASSASLRSQSS) shows a compositional bias: low complexity.

Belongs to the DUOXA family. Interacts with bli-3 and tsp-15. Interacts with csnk-1. Expressed in the hypodermis, specifically in seam cells, the terminal bulb of the pharynx, the distal region of the gonadal arm, vulva, spermatheca and uterus.

The protein resides in the membrane. Plays a role in cuticle biogenesis. In complex with tsp-15 and the dual oxidase bli-3, promotes the generation of reactive oxygen species (ROS) and tyrosine cross-linking of collagen, thus stabilizing cuticular extracellular matrix. The polypeptide is Dual oxidase maturation factor 1 (Caenorhabditis elegans).